Consider the following 170-residue polypeptide: VIP peptides (170 aa).

The first 21 residues, 1–21 (MESRSKPQFLAILTLFSVLFS), serve as a signal peptide directing secretion. Residues 22–79 (QSLAWPLYGPPSSVRLDDRLQFEGAGDPDQVSLKADSDILQNALAENDTPYYDVSRNA) constitute a propeptide that is removed on maturation. Phosphoserine is present on serine 76. Isoleucine 107 bears the Isoleucine amide mark. A glycan (N-linked (GlcNAc...) asparagine) is linked at asparagine 133. Asparagine 152 is modified (asparagine amide). Residues 156 to 170 (SSEGDSPDFLEELEK) constitute a propeptide that is removed on maturation.

Belongs to the glucagon family.

The protein resides in the secreted. Its function is as follows. VIP is a neuropeptide involved in a diverse array of physiological processes through activating the PACAP subfamily of class B1 G protein-coupled receptors: VIP receptor 1 (VPR1) and VIP receptor 2 (VPR2). Abundantly expressed throughout the CNS and peripheral nervous systems where they primarily exert neuroprotective and immune modulatory roles. Also causes vasodilation, lowers arterial blood pressure, stimulates myocardial contractility, increases glycogenolysis and relaxes the smooth muscle of trachea, stomach and gall bladder. Functionally, PHM-27 and PHV-42 are two bioactive forms from proteolysis of the same precursor protein, that cause vasodilation. PHM-27 is a potent agonist of the calcitonin receptor CALCR, with similar efficacy as calcitonin. The chain is VIP peptides (Vip) from Rattus norvegicus (Rat).